Reading from the N-terminus, the 322-residue chain is Probable manganese-dependent inorganic pyrophosphatase (322 aa).

Mn(2+)-binding residues include His10, Asp14, Asp16, Asp86, His108, and Asp160.

Belongs to the PPase class C family. Mn(2+) is required as a cofactor.

The protein localises to the cytoplasm. The enzyme catalyses diphosphate + H2O = 2 phosphate + H(+). The protein is Probable manganese-dependent inorganic pyrophosphatase (ppaC) of Archaeoglobus fulgidus (strain ATCC 49558 / DSM 4304 / JCM 9628 / NBRC 100126 / VC-16).